We begin with the raw amino-acid sequence, 196 residues long: FMN-dependent NADH:quinone oxidoreductase (196 aa).

Residues Ser10, 16-18, 93-96, and 137-140 each bind FMN; these read SQS, MYNF, and TRGG.

This sequence belongs to the azoreductase type 1 family. As to quaternary structure, homodimer. It depends on FMN as a cofactor.

The enzyme catalyses 2 a quinone + NADH + H(+) = 2 a 1,4-benzosemiquinone + NAD(+). It catalyses the reaction N,N-dimethyl-1,4-phenylenediamine + anthranilate + 2 NAD(+) = 2-(4-dimethylaminophenyl)diazenylbenzoate + 2 NADH + 2 H(+). Its function is as follows. Quinone reductase that provides resistance to thiol-specific stress caused by electrophilic quinones. Also exhibits azoreductase activity. Catalyzes the reductive cleavage of the azo bond in aromatic azo compounds to the corresponding amines. This Shewanella amazonensis (strain ATCC BAA-1098 / SB2B) protein is FMN-dependent NADH:quinone oxidoreductase.